A 381-amino-acid chain; its full sequence is Deoxyguanosinetriphosphate triphosphohydrolase-like protein (381 aa).

Positions 76-203 constitute an HD domain; sequence RMTHTLEVAG…ADLSDEIAYT (128 aa).

The protein belongs to the dGTPase family. Type 2 subfamily.

The protein is Deoxyguanosinetriphosphate triphosphohydrolase-like protein of Leptospira borgpetersenii serovar Hardjo-bovis (strain JB197).